Reading from the N-terminus, the 171-residue chain is Peptide methionine sulfoxide reductase MsrA (171 aa).

Cysteine 13 is a catalytic residue.

This sequence belongs to the MsrA Met sulfoxide reductase family.

The enzyme catalyses L-methionyl-[protein] + [thioredoxin]-disulfide + H2O = L-methionyl-(S)-S-oxide-[protein] + [thioredoxin]-dithiol. It catalyses the reaction [thioredoxin]-disulfide + L-methionine + H2O = L-methionine (S)-S-oxide + [thioredoxin]-dithiol. Its function is as follows. Has an important function as a repair enzyme for proteins that have been inactivated by oxidation. Catalyzes the reversible oxidation-reduction of methionine sulfoxide in proteins to methionine. This Mycobacterium sp. (strain MCS) protein is Peptide methionine sulfoxide reductase MsrA.